Consider the following 169-residue polypeptide: NADH dehydrogenase [ubiquinone] 1 alpha subcomplex assembly factor 2 (169 aa).

Positions 116–169 are disordered; it reads TSEELLPPPVQTQIKGHASAPYFGKEEPSVAPSSTGKTFQPGSWMPRDGKSHNQ. Position 134 is a phosphoserine (Ser134). Polar residues predominate over residues 146–156; it reads APSSTGKTFQP.

It belongs to the complex I NDUFA12 subunit family. Interacts with ARMC9. As to expression, highly expressed in ESCC cells. Also expressed in heart, skeletal muscle, liver, and in fibroblasts.

Its subcellular location is the mitochondrion. Acts as a molecular chaperone for mitochondrial complex I assembly. Complex I functions in the transfer of electrons from NADH to the respiratory chain. The immediate electron acceptor for the enzyme is believed to be ubiquinone. Is involved in the initial steps of cilia formation, including removal of CP110 from the mother centrioles, docking of membrane vesicles to the mother centrioles, and establishment of the transition zone. The polypeptide is NADH dehydrogenase [ubiquinone] 1 alpha subcomplex assembly factor 2 (NDUFAF2) (Homo sapiens (Human)).